Reading from the N-terminus, the 188-residue chain is Elongation factor P (188 aa).

Belongs to the elongation factor P family.

It localises to the cytoplasm. It functions in the pathway protein biosynthesis; polypeptide chain elongation. In terms of biological role, involved in peptide bond synthesis. Stimulates efficient translation and peptide-bond synthesis on native or reconstituted 70S ribosomes in vitro. Probably functions indirectly by altering the affinity of the ribosome for aminoacyl-tRNA, thus increasing their reactivity as acceptors for peptidyl transferase. The polypeptide is Elongation factor P (Nitrobacter winogradskyi (strain ATCC 25391 / DSM 10237 / CIP 104748 / NCIMB 11846 / Nb-255)).